A 154-amino-acid chain; its full sequence is MEKKLPRIKALLTPGEVAKRSGVAVSALHFYESKGLITSIRNSGNQRRYKRDVLRYVAIIKIAQRIGIPLATIGEAFGVLPEGHTLSAKEWKQLSSQWREELDRRIHTLVALRDELDGCIGCGCLSRSDCPLRNPGDRLGEEGTGARLLEDEQN.

An HTH merR-type domain is found at 11–79; that stretch reads LLTPGEVAKR…LATIGEAFGV (69 aa). A DNA-binding region (H-T-H motif) is located at residues 14-33; sequence PGEVAKRSGVAVSALHFYES. The [2Fe-2S] cluster site is built by Cys119, Cys122, Cys124, and Cys130. The might be part of a sensor region stretch occupies residues 119–130; that stretch reads CIGCGCLSRSDC. The interval 135-154 is disordered; sequence PGDRLGEEGTGARLLEDEQN.

As to quaternary structure, homodimer.

Activates the transcription of the soxS gene which itself controls the superoxide response regulon. SoxR contains a 2Fe-2S iron-sulfur cluster that may act as a redox sensor system that recognizes superoxide. The variable redox state of the Fe-S cluster is employed in vivo to modulate the transcriptional activity of SoxR in response to specific types of oxidative stress. Upon reduction of 2Fe-2S cluster, SoxR reversibly loses its transcriptional activity, but retains its DNA binding affinity. This chain is Redox-sensitive transcriptional activator SoxR (soxR), found in Escherichia coli O157:H7.